We begin with the raw amino-acid sequence, 303 residues long: Probable cell division protein WhiA (303 aa).

A DNA-binding region (H-T-H motif) is located at residues Ser-272–Leu-303.

This sequence belongs to the WhiA family.

Its function is as follows. Involved in cell division and chromosome segregation. The sequence is that of Probable cell division protein WhiA from Streptococcus mutans serotype c (strain ATCC 700610 / UA159).